A 2209-amino-acid polypeptide reads, in one-letter code: Genome polyprotein (2209 aa).

Gly2 is lipidated: N-myristoyl glycine; by host. At 2–1520 (GAQVSSQKVG…NINRAMTILQ (1519 aa)) the chain is on the cytoplasmic side. Residues 580–600 (GLGQMLESMIDNTVRETVGAA) form an amphipathic alpha-helix region. The segment at 599-619 (AATSRDALPNTEASGPTHSKE) is disordered. Active-site for protease 2A activity residues include His901 and Asp919. 2 residues coordinate Zn(2+): Cys936 and Cys938. The For protease 2A activity role is filled by Cys990. Zn(2+)-binding residues include Cys996 and His998. The tract at residues 1128–1200 (GDSWLKKFTE…HQSCPSQEHQ (73 aa)) is membrane-binding. The segment at 1128–1266 (GDSWLKKFTE…SPGTGKSVAT (139 aa)) is oligomerization. The tract at residues 1149 to 1153 (SNKIS) is RNA-binding. Residues 1232-1388 (EHTINNYIQF…NEYSRDGKLN (157 aa)) form the SF3 helicase domain. 1256–1263 (GSPGTGKS) serves as a coordination point for ATP. Residues Cys1396, Cys1399, Cys1408, and Cys1413 each contribute to the Zn(2+) site. The C4-type zinc finger occupies 1396–1413 (CKNCHQPANFKRCCPLVC). Residues 1440–1447 (ERNRRSNI) are RNA-binding. Positions 1451 to 1456 (MEALFQ) are oligomerization. Residues 1521 to 1536 (AVTTFAAVAGVVYVMY) lie within the membrane without spanning it. The Cytoplasmic portion of the chain corresponds to 1537 to 2209 (KLFAGHQGAY…TLYRRWLDSF (673 aa)). Tyr1546 carries the O-(5'-phospho-RNA)-tyrosine modification. Tyr1546 carries the post-translational modification O-UMP-tyrosine; transient. In terms of domain architecture, Peptidase C3 spans 1566–1744 (GPGFDYAVAM…FAAALKRSYF (179 aa)). Catalysis depends on for protease 3C activity residues His1605, Glu1636, and Cys1712. The 116-residue stretch at 1975 to 2090 (EKLFAFDYTG…SYPHEVDASL (116 aa)) folds into the RdRp catalytic domain. Positions 1981 and 2076 each coordinate Mg(2+).

This sequence belongs to the picornaviruses polyprotein family. As to quaternary structure, interacts with capsid protein VP1 and capsid protein VP3 to form heterotrimeric protomers. Interacts with capsid protein VP0, and capsid protein VP3 to form heterotrimeric protomers. Five protomers subsequently associate to form pentamers which serve as building blocks for the capsid. Interacts with capsid protein VP2, capsid protein VP3 and capsid protein VP4 following cleavage of capsid protein VP0. Interacts with human PVR. In terms of assembly, interacts with capsid protein VP1 and capsid protein VP3 in the mature capsid. As to quaternary structure, interacts with capsid protein VP0 and capsid protein VP1 to form heterotrimeric protomers. Five protomers subsequently associate to form pentamers which serve as building blocks for the capsid. Interacts with capsid protein VP4 in the mature capsid. Interacts with protein 2C; this interaction may be important for virion morphogenesis. Interacts with capsid protein VP1 and capsid protein VP3. In terms of assembly, homodimer. As to quaternary structure, homohexamer; forms a hexameric ring structure with 6-fold symmetry characteristic of AAA+ ATPases. Interacts (via N-terminus) with host RTN3 (via reticulon domain); this interaction is important for viral replication. Interacts with capsid protein VP3; this interaction may be important for virion morphogenesis. Interacts with protein 3CD. In terms of assembly, homodimer. Interacts with host GBF1. Interacts (via GOLD domain) with host ACBD3 (via GOLD domain); this interaction allows the formation of a viral protein 3A/ACBD3 heterotetramer with a 2:2 stoichiometry, which will stimulate the recruitment of host PI4KB in order to synthesize PI4P at the viral RNA replication sites. As to quaternary structure, interacts with RNA-directed RNA polymerase. Interacts with protein 3AB and with RNA-directed RNA polymerase. In terms of assembly, interacts with Viral protein genome-linked and with protein 3CD. Mg(2+) serves as cofactor. Post-translationally, specific enzymatic cleavages in vivo by the viral proteases yield processing intermediates and the mature proteins. Myristoylation is required for the formation of pentamers during virus assembly. Further assembly of 12 pentamers and a molecule of genomic RNA generates the provirion. In terms of processing, during virion maturation, immature virions are rendered infectious following cleavage of VP0 into VP4 and VP2. This maturation seems to be an autocatalytic event triggered by the presence of RNA in the capsid and it is followed by a conformational change infectious virion. Post-translationally, myristoylation is required during RNA encapsidation and formation of the mature virus particle. VPg is uridylylated by the polymerase into VPg-pUpU. This acts as a nucleotide-peptide primer for the genomic RNA replication.

It localises to the virion. The protein localises to the host cytoplasm. It is found in the host cytoplasmic vesicle membrane. Its subcellular location is the host nucleus. The catalysed reaction is RNA(n) + a ribonucleoside 5'-triphosphate = RNA(n+1) + diphosphate. It catalyses the reaction Selective cleavage of Tyr-|-Gly bond in the picornavirus polyprotein.. It carries out the reaction a ribonucleoside 5'-triphosphate + H2O = a ribonucleoside 5'-diphosphate + phosphate + H(+). The enzyme catalyses Selective cleavage of Gln-|-Gly bond in the poliovirus polyprotein. In other picornavirus reactions Glu may be substituted for Gln, and Ser or Thr for Gly.. With respect to regulation, replication or transcription is subject to high level of random mutations by the nucleotide analog ribavirin. In terms of biological role, forms an icosahedral capsid of pseudo T=3 symmetry with capsid proteins VP2 and VP3. The capsid is 300 Angstroms in diameter, composed of 60 copies of each capsid protein and enclosing the viral positive strand RNA genome. Capsid protein VP1 mainly forms the vertices of the capsid. Capsid protein VP1 interacts with host cell receptor PVR to provide virion attachment to target host epithelial cells. This attachment induces virion internalization predominantly through clathrin- and caveolin-independent endocytosis in Hela cells and through caveolin-mediated endocytosis in brain microvascular endothelial cells. Tyrosine kinases are probably involved in the entry process. Virus binding to PVR induces increased junctional permeability and rearrangement of junctional proteins. Modulation of endothelial tight junctions, as well as cytolytic infection of endothelial cells themselves, may result in loss of endothelial integrity which may help the virus to reach the CNS. After binding to its receptor, the capsid undergoes conformational changes. Capsid protein VP1 N-terminus (that contains an amphipathic alpha-helix) and capsid protein VP4 are externalized. Together, they shape a pore in the host membrane through which viral genome is translocated to host cell cytoplasm. Functionally, forms an icosahedral capsid of pseudo T=3 symmetry with capsid proteins VP1 and VP3. The capsid is 300 Angstroms in diameter, composed of 60 copies of each capsid protein and enclosing the viral positive strand RNA genome. Forms an icosahedral capsid of pseudo T=3 symmetry with capsid proteins VP2 and VP1. The capsid is 300 Angstroms in diameter, composed of 60 copies of each capsid protein and enclosing the viral positive strand RNA genome. Its function is as follows. Lies on the inner surface of the capsid shell. After binding to the host receptor, the capsid undergoes conformational changes. Capsid protein VP4 is released, Capsid protein VP1 N-terminus is externalized, and together, they shape a pore in the host membrane through which the viral genome is translocated into the host cell cytoplasm. In terms of biological role, component of immature procapsids, which is cleaved into capsid proteins VP4 and VP2 after maturation. Allows the capsid to remain inactive before the maturation step. Functionally, cysteine protease that cleaves viral polyprotein and specific host proteins. It is responsible for the autocatalytic cleavage between the P1 and P2 regions, which is the first cleavage occurring in the polyprotein. Also cleaves the host translation initiation factor EIF4G1, in order to shut down the capped cellular mRNA translation. Inhibits the host nucleus-cytoplasm protein and RNA trafficking by cleaving host members of the nuclear pores including NUP98, NUP62 and NUP153. Counteracts stress granule formation probably by antagonizing its assembly or promoting its dissassembly. Cleaves and inhibits host IFIH1/MDA5, thereby inhibiting the type-I IFN production and the establishment of the antiviral state. Cleaves and inhibits host MAVS, thereby inhibiting the type-I IFN production and the establishment of the antiviral state. Plays an essential role in the virus replication cycle by acting as a viroporin. Creates a pore in the host endoplasmic reticulum and as a consequence releases Ca2+ in the cytoplasm of infected cell. In turn, high levels of cytoplasmic calcium may trigger membrane trafficking and transport of viral ER-associated proteins to viroplasms, sites of viral genome replication. Its function is as follows. Induces and associates with structural rearrangements of intracellular membranes. Displays RNA-binding, nucleotide binding and NTPase activities. May play a role in virion morphogenesis and viral RNA encapsidation by interacting with the capsid protein VP3. In terms of biological role, localizes the viral replication complex to the surface of membranous vesicles. Together with protein 3CD binds the Cis-Active RNA Element (CRE) which is involved in RNA synthesis initiation. Acts as a cofactor to stimulate the activity of 3D polymerase, maybe through a nucleid acid chaperone activity. Functionally, localizes the viral replication complex to the surface of membranous vesicles. It inhibits host cell endoplasmic reticulum-to-Golgi apparatus transport and causes the disassembly of the Golgi complex, possibly through GBF1 interaction. This would result in depletion of MHC, trail receptors and IFN receptors at the host cell surface. Plays an essential role in viral RNA replication by recruiting ACBD3 and PI4KB at the viral replication sites, thereby allowing the formation of the rearranged membranous structures where viral replication takes place. Acts as a primer for viral RNA replication and remains covalently bound to viral genomic RNA. VPg is uridylylated prior to priming replication into VPg-pUpU. The oriI viral genomic sequence may act as a template for this. The VPg-pUpU is then used as primer on the genomic RNA poly(A) by the RNA-dependent RNA polymerase to replicate the viral genome. During genome replication, the VPg-RNA linkage is removed by the host TDP2, thereby accelerating replication. During the late stage of the replication cycle, host TDP2 is excluded from sites of viral RNA synthesis and encapsidation, allowing for the generation of progeny virions. Its function is as follows. Involved in the viral replication complex and viral polypeptide maturation. It exhibits protease activity with a specificity and catalytic efficiency that is different from protease 3C. Protein 3CD binds to the 5'UTR of the viral genome. In terms of biological role, major viral protease that mediates proteolytic processing of the polyprotein. Cleaves host EIF5B, contributing to host translation shutoff. Cleaves also host PABPC1, contributing to host translation shutoff. Cleaves host RIGI and thus contributes to the inhibition of type I interferon production. Cleaves host NLRP1, triggers host N-glycine-mediated degradation of the autoinhibitory NLRP1 N-terminal fragment. Inhibits the integrated stress response (ISR) in the infected cell by cleaving host G3BP1. Stress granule formation is thus inhibited, which allows protein synthesis and viral replication. Functionally, replicates the viral genomic RNA on the surface of intracellular membranes. May form linear arrays of subunits that propagate along a strong head-to-tail interaction called interface-I. Covalently attaches UMP to a tyrosine of VPg, which is used to prime RNA synthesis. The positive stranded RNA genome is first replicated at virus induced membranous vesicles, creating a dsRNA genomic replication form. This dsRNA is then used as template to synthesize positive stranded RNA genomes. ss(+)RNA genomes are either translated, replicated or encapsidated. The polypeptide is Genome polyprotein (Homo sapiens (Human)).